A 204-amino-acid chain; its full sequence is MTSMYFVAGLLLMIVQGSWQSPLQETEEKSRSFKASQAEPLDDSRQLNEVKRHSQGTFTSDYSKYLDTRRAQDFVQWLMNTKRSGQQGVEEREKENLLDQLSSNGLARHHAEYERHADGRYTSDISSYLEGQAAKEFIAWLVNGRGRRDFLEEAGTADDIGRRHADGTFTSDYNQLLDDIATQEFLKWLINQKVTQRDLLGEYQ.

A signal peptide spans 1-20 (MTSMYFVAGLLLMIVQGSWQ). Residues 84–109 (SGQQGVEEREKENLLDQLSSNGLARH) constitute a propeptide that is removed on maturation. At arginine 145 the chain carries Arginine amide. 2 propeptides span residues 149-161 (DFLE…DDIG) and 197-204 (RDLLGEYQ).

It belongs to the glucagon family. Isoform LPII is expressed in both pancreas and intestine. Expression of isoform LPI is restricted to the pancreas. Neither isoform is detected in salivary glands.

The protein localises to the secreted. Functionally, plays a key role in glucose metabolism and homeostasis. Regulates blood glucose by increasing gluconeogenesis and decreasing glycolysis. In terms of biological role, potent stimulator of glucose-dependent insulin release. Plays important roles on gastric motility and the suppression of plasma glucagon levels. Stimulates intestinal growth and up-regulates villus height in the small intestine, concomitant with increased crypt cell proliferation and decreased enterocyte apoptosis. The protein is Pro-glucagon (GCG) of Heloderma suspectum (Gila monster).